Here is a 348-residue protein sequence, read N- to C-terminus: Flagellar P-ring protein (348 aa).

The first 16 residues, 1 to 16, serve as a signal peptide directing secretion; sequence MRVLTIFLLFMTSIFA.

It belongs to the FlgI family. The basal body constitutes a major portion of the flagellar organelle and consists of four rings (L,P,S, and M) mounted on a central rod.

The protein resides in the periplasm. Its subcellular location is the bacterial flagellum basal body. In terms of biological role, assembles around the rod to form the L-ring and probably protects the motor/basal body from shearing forces during rotation. The polypeptide is Flagellar P-ring protein (Campylobacter jejuni subsp. jejuni serotype O:23/36 (strain 81-176)).